The primary structure comprises 311 residues: MLRTTVRTLQQQAFLHHSFERVSLPELHSTIKDVQTTCYCQNINARLPSTTDPLDPQIRLSDRTPYYNKHVLLVSPGDKFAQPWKIAWNHNLDTNLNRPYNAISKLRSYLGKSPGILINAVHLQNDFIPRPKEDDEWLFFFVIPDMKLYKISETDLEQFASFLNEGVVQAPRLSFQDYLIGKARVPQETHKVHHKNLTKFQGDILLRDWSLVCGHYKRDAKCGEMGPDIIAAFQDEKLLTDNNLGLISHVGGHVFAGNVIFYKLFKAENALNKLDSLWFGKVYPHNLKLLCENLENGKIIDEMYRGGISMN.

This sequence belongs to the AIM32 family.

The sequence is that of Altered inheritance of mitochondria protein 32 (AIM32) from Saccharomyces kudriavzevii (Yeast).